A 393-amino-acid polypeptide reads, in one-letter code: Pinosylvin synthase (393 aa).

57–60 contacts substrate; the sequence is KFKR. The active site involves cysteine 167. Residues leucine 270 and 308 to 310 each bind substrate; that span reads GGR.

Belongs to the thiolase-like superfamily. Chalcone/stilbene synthases family. Homodimer.

The protein localises to the cytoplasm. It catalyses the reaction (E)-cinnamoyl-CoA + 3 malonyl-CoA + 3 H(+) = (E)-pinosylvin + 4 CO2 + 4 CoA. It carries out the reaction 3-phenylpropanoyl-CoA + 3 malonyl-CoA + 3 H(+) = dihydropinosylvin + 4 CO2 + 4 CoA. Its pathway is phytoalexin biosynthesis; hydropinosylvin biosynthesis. Functionally, catalyzes the production of pinosylvin from cinnamoyl-CoA and malonyl-CoA, and dihydropinosylvin from dihydrocinnamoyl-CoA. In Pinus sylvestris (Scotch pine), this protein is Pinosylvin synthase.